Reading from the N-terminus, the 330-residue chain is Ferredoxin--NADP reductase (330 aa).

Glutamate 35, glutamine 43, tyrosine 48, valine 90, phenylalanine 123, aspartate 285, and threonine 326 together coordinate FAD.

This sequence belongs to the ferredoxin--NADP reductase type 2 family. As to quaternary structure, homodimer. Requires FAD as cofactor.

The catalysed reaction is 2 reduced [2Fe-2S]-[ferredoxin] + NADP(+) + H(+) = 2 oxidized [2Fe-2S]-[ferredoxin] + NADPH. The polypeptide is Ferredoxin--NADP reductase (Streptococcus pyogenes serotype M2 (strain MGAS10270)).